Reading from the N-terminus, the 422-residue chain is L-threonine dehydratase biosynthetic IlvA (422 aa).

Lysine 56 carries the post-translational modification N6-(pyridoxal phosphate)lysine. Residues asparagine 83, 189–193, and serine 315 contribute to the pyridoxal 5'-phosphate site; that span reads GGGGL. The 75-residue stretch at 339–413 folds into the ACT-like domain; that stretch reads HYFILNFPQR…FDKSNIYINE (75 aa).

This sequence belongs to the serine/threonine dehydratase family. Homotetramer. The cofactor is pyridoxal 5'-phosphate.

The catalysed reaction is L-threonine = 2-oxobutanoate + NH4(+). Its pathway is amino-acid biosynthesis; L-isoleucine biosynthesis; 2-oxobutanoate from L-threonine: step 1/1. Its function is as follows. Catalyzes the anaerobic formation of alpha-ketobutyrate and ammonia from threonine in a two-step reaction. The first step involved a dehydration of threonine and a production of enamine intermediates (aminocrotonate), which tautomerizes to its imine form (iminobutyrate). Both intermediates are unstable and short-lived. The second step is the nonenzymatic hydrolysis of the enamine/imine intermediates to form 2-ketobutyrate and free ammonia. In the low water environment of the cell, the second step is accelerated by RidA. This is L-threonine dehydratase biosynthetic IlvA (ilvA) from Staphylococcus saprophyticus subsp. saprophyticus (strain ATCC 15305 / DSM 20229 / NCIMB 8711 / NCTC 7292 / S-41).